Consider the following 65-residue polypeptide: Large ribosomal subunit protein uL29 (65 aa).

The protein belongs to the universal ribosomal protein uL29 family.

The sequence is that of Large ribosomal subunit protein uL29 from Delftia acidovorans (strain DSM 14801 / SPH-1).